Reading from the N-terminus, the 215-residue chain is Myelin protein zero-like protein 2 (215 aa).

An N-terminal signal peptide occupies residues 1–26 (MYGKSPALVLPLLLSLQLTALCPTEA). Residues 27-141 (VEIYTSGALE…DGLVGTIRLS (115 aa)) enclose the Ig-like V-type domain. Topologically, residues 27–154 (VEIYTSGALE…TVPFSEIYFL (128 aa)) are extracellular. Residues Asn-39 and Asn-118 are each glycosylated (N-linked (GlcNAc...) asparagine). A disulfide bond links Cys-47 and Cys-123. The helical transmembrane segment at 155–175 (AVAIGSACALMIIVVIVVVLF) threads the bilayer. The Cytoplasmic segment spans residues 176-215 (QHFRKKRWADRADKAEGTKSKEEEKLNQGNKVSVFVEDTD). The segment covering 187–201 (ADKAEGTKSKEEEKL) has biased composition (basic and acidic residues). Residues 187 to 215 (ADKAEGTKSKEEEKLNQGNKVSVFVEDTD) form a disordered region.

The protein belongs to the myelin P0 protein family. In terms of tissue distribution, widely expressed. Expressed in the cochlea, in Deiters' cells, possibly at contact sites with the basilar membrane. Expressed in both outer and inner auditory hair cells. In the stria vascularis, detected in the basal cell layer. Not detected in thymocytes, lymphocytes, macrophage or dendritic cells.

The protein localises to the membrane. In terms of biological role, mediates homophilic cell-cell adhesion. This chain is Myelin protein zero-like protein 2 (Mpzl2), found in Mus musculus (Mouse).